Here is a 154-residue protein sequence, read N- to C-terminus: Lipoprotein signal peptidase (154 aa).

A run of 4 helical transmembrane segments spans residues 8–28 (AFFL…YWAL), 36–56 (IVVN…AFSF), 66–86 (WLFA…LLTK), and 88–108 (HHWL…GNLY). Active-site residues include Asp118 and Asp136. Residues 129-149 (WPVFNLADVAITLGVILMLIA) form a helical membrane-spanning segment.

The protein belongs to the peptidase A8 family.

It is found in the cell inner membrane. The catalysed reaction is Release of signal peptides from bacterial membrane prolipoproteins. Hydrolyzes -Xaa-Yaa-Zaa-|-(S,diacylglyceryl)Cys-, in which Xaa is hydrophobic (preferably Leu), and Yaa (Ala or Ser) and Zaa (Gly or Ala) have small, neutral side chains.. The protein operates within protein modification; lipoprotein biosynthesis (signal peptide cleavage). Functionally, this protein specifically catalyzes the removal of signal peptides from prolipoproteins. In Dichelobacter nodosus (strain VCS1703A), this protein is Lipoprotein signal peptidase.